The chain runs to 380 residues: Protein RecA (380 aa).

65–72 (GPESSGKT) is an ATP binding site. The disordered stretch occupies residues 329 to 380 (DATGEETSETDDQAKEAKDKGTAKNGSKGQSKSTKATPAETALDLGDQPTEK). Positions 340–350 (DQAKEAKDKGT) are enriched in basic and acidic residues. The segment covering 352-364 (KNGSKGQSKSTKA) has biased composition (polar residues).

The protein belongs to the RecA family.

The protein resides in the cytoplasm. In terms of biological role, can catalyze the hydrolysis of ATP in the presence of single-stranded DNA, the ATP-dependent uptake of single-stranded DNA by duplex DNA, and the ATP-dependent hybridization of homologous single-stranded DNAs. It interacts with LexA causing its activation and leading to its autocatalytic cleavage. This is Protein RecA from Lactiplantibacillus plantarum (strain ATCC BAA-793 / NCIMB 8826 / WCFS1) (Lactobacillus plantarum).